Reading from the N-terminus, the 96-residue chain is Phosphoribosyl-ATP pyrophosphatase (96 aa).

It belongs to the PRA-PH family.

It localises to the cytoplasm. It catalyses the reaction 1-(5-phospho-beta-D-ribosyl)-ATP + H2O = 1-(5-phospho-beta-D-ribosyl)-5'-AMP + diphosphate + H(+). It participates in amino-acid biosynthesis; L-histidine biosynthesis; L-histidine from 5-phospho-alpha-D-ribose 1-diphosphate: step 2/9. The sequence is that of Phosphoribosyl-ATP pyrophosphatase from Methanobrevibacter smithii (strain ATCC 35061 / DSM 861 / OCM 144 / PS).